Consider the following 184-residue polypeptide: Shikimate kinase (184 aa).

12–17 (GSGKST) provides a ligand contact to ATP. Ser-16 contributes to the Mg(2+) binding site. Residues Asp-34, Arg-58, and Gly-80 each coordinate substrate. Position 117 (Arg-117) interacts with ATP. Position 136 (Arg-136) interacts with substrate. Arg-153 contacts ATP. Residues 163–184 (MSRLDDPTPNTSPSSTASGAAT) form a disordered region. Low complexity predominate over residues 169–184 (PTPNTSPSSTASGAAT).

The protein belongs to the shikimate kinase family. As to quaternary structure, monomer. It depends on Mg(2+) as a cofactor.

Its subcellular location is the cytoplasm. It catalyses the reaction shikimate + ATP = 3-phosphoshikimate + ADP + H(+). It functions in the pathway metabolic intermediate biosynthesis; chorismate biosynthesis; chorismate from D-erythrose 4-phosphate and phosphoenolpyruvate: step 5/7. Its function is as follows. Catalyzes the specific phosphorylation of the 3-hydroxyl group of shikimic acid using ATP as a cosubstrate. The polypeptide is Shikimate kinase (Mycobacterium marinum (strain ATCC BAA-535 / M)).